Here is a 440-residue protein sequence, read N- to C-terminus: Transposon Ty1-LR2 Gag polyprotein (440 aa).

Polar residues-rich tracts occupy residues 1–23 (MESQ…SVTS), 48–60 (TKAN…TPAS), and 127–152 (QSQF…GNTF). Disordered stretches follow at residues 1 to 93 (MESQ…MMTQ), 126 to 174 (PQSQ…PPPM), and 352 to 440 (GSRN…PGTY). Over residues 153 to 165 (TDSSSADSDMTST) the composition is skewed to low complexity. The tract at residues 299 to 401 (NNGIHINNKV…NSKSKTARAH (103 aa)) is RNA-binding. The span at 402–418 (NVSTSNNSPSTDNDSIS) shows a compositional bias: low complexity. Residue Ser416 is modified to Phosphoserine. The span at 419 to 428 (KSTTEPIQLN) shows a compositional bias: polar residues. The segment covering 429–440 (NKHDLHLRPGTY) has biased composition (basic and acidic residues).

In terms of assembly, homotrimer.

It localises to the cytoplasm. In terms of biological role, capsid protein (CA) is the structural component of the virus-like particle (VLP), forming the shell that encapsulates the retrotransposons dimeric RNA genome. The particles are assembled from trimer-clustered units and there are holes in the capsid shells that allow for the diffusion of macromolecules. CA also has nucleocapsid-like chaperone activity, promoting primer tRNA(i)-Met annealing to the multipartite primer-binding site (PBS), dimerization of Ty1 RNA and initiation of reverse transcription. This Saccharomyces cerevisiae (strain ATCC 204508 / S288c) (Baker's yeast) protein is Transposon Ty1-LR2 Gag polyprotein (TY1A-LR2).